The following is a 249-amino-acid chain: MNEKIRSQSVLNTLETFFIKENHYDMQREESSIVNACLRYLGYSKSMCHEKMPIFMDIAFIEYCFNLSLDPSSFQNLPITQTQPDSQQILWEYSLISNALERLENIELERQNCMREDGLVKYTNELLLNKETLNNEALKLYSCAKAGICRWMAFHFLEQEPIDHINFTKFLQDWGSHNEKEMEALQRLSKHKIRKRLIYVSQHKKKMPWSKFNSVLSRYIQCTKLQLEVFCDYDFKQREIVKMLTSNIN.

As to quaternary structure, interacts with pot1, rap1 and tpz1.

It localises to the cytoplasm. The protein localises to the nucleus. It is found in the chromosome. The protein resides in the telomere. Telomeric DNA-binding protein that negatively regulates telomerase and telomere length. This is Protection of telomeres protein poz1 (poz1) from Schizosaccharomyces pombe (strain 972 / ATCC 24843) (Fission yeast).